Reading from the N-terminus, the 316-residue chain is Ribosomal RNA small subunit methyltransferase H (316 aa).

Residues 35 to 37 (SGH), aspartate 55, phenylalanine 84, aspartate 105, and glutamine 112 contribute to the S-adenosyl-L-methionine site.

It belongs to the methyltransferase superfamily. RsmH family.

The protein resides in the cytoplasm. The enzyme catalyses cytidine(1402) in 16S rRNA + S-adenosyl-L-methionine = N(4)-methylcytidine(1402) in 16S rRNA + S-adenosyl-L-homocysteine + H(+). Functionally, specifically methylates the N4 position of cytidine in position 1402 (C1402) of 16S rRNA. This chain is Ribosomal RNA small subunit methyltransferase H, found in Streptococcus pyogenes serotype M49 (strain NZ131).